The primary structure comprises 978 residues: Sensor histidine kinase TodS (978 aa).

The region spanning 32–103 is the PAS 1 domain; the sequence is CEEHARIIFD…TQKRLVETAS (72 aa). A PAC 1 domain is found at 108 to 162; it reads VRCDVEILGKSGGREVIAVDFSLLPICNEEGSIVYLLAEGRNITDKKKAEAMLAL. One can recognise a Histidine kinase 1 domain in the interval 187–405; it reads KVSHELRTPL…LFQVKLPLNA (219 aa). Residue H190 is modified to Phosphohistidine; by autocatalysis. The region spanning 452–567 is the Response regulatory domain; it reads RVLIVEDNPD…ELRARVSNLV (116 aa). D500 bears the 4-aspartylphosphate mark. The region spanning 611–681 is the PAS 2 domain; sequence SEARWKAVYE…QRLANLLQGG (71 aa). The 53-residue stretch at 685-737 folds into the PAC 2 domain; that stretch reads YSVERSYLCKNGSTIWANASVSLMPQRVGESPVILQIIDDITEKKQAQENLNQ. The Histidine kinase 2 domain maps to 757-974; it reads YIAHEINQPL…CFLVSIPARQ (218 aa). At H760 the chain carries Phosphohistidine.

In terms of assembly, homodimer. Binds as a dimer to a pseudopalindromic sequence. In terms of processing, autophosphorylated. Activation requires a sequential transfer of a phosphate group from a His in the primary transmitter domain, to an Asp in the receiver domain and to a His in the secondary transmitter domain.

The protein resides in the cytoplasm. It carries out the reaction ATP + protein L-histidine = ADP + protein N-phospho-L-histidine.. Functionally, member of the two-component regulatory system TodS/TodT involved in the regulation of toluene degradation. Phosphorylates TodT via a four-step phosphorelay in response to toluene. The chain is Sensor histidine kinase TodS (todS) from Pseudomonas putida (strain ATCC 700007 / DSM 6899 / JCM 31910 / BCRC 17059 / LMG 24140 / F1).